A 145-amino-acid polypeptide reads, in one-letter code: Maximins 5/H4 type 2 (145 aa).

An N-terminal signal peptide occupies residues 1-18 (MNFKYIVAVSFLIASAYA). Propeptides lie at residues 19-43 (RSVQ…REIR) and 74-124 (TAEE…KEKR). Leucine amide is present on Leu-144.

Belongs to the bombinin family. Expressed by the skin glands.

It is found in the secreted. Functionally, maximin-5 shows antibacterial activity against both Gram-positive and Gram-negative bacteria. The only exception is the resistance of E.coli. Also shows antimicrobial activity against fungi C.albicans, A.flavus and P.uticale. It has little hemolytic activity. It does not possess a significant cytotoxicity against tumor cell lines. It does not possess a significant anti-HIV activity. Its function is as follows. Maximin-H4 shows antibacterial activity against both Gram-positive and Gram-negative bacteria. It also shows antimicrobial activity against the fungus C.albicans. Shows strong hemolytic activity. The polypeptide is Maximins 5/H4 type 2 (Bombina maxima (Giant fire-bellied toad)).